Consider the following 256-residue polypeptide: Triosephosphate isomerase (256 aa).

Residue 12-14 (NWK) coordinates substrate. Histidine 99 functions as the Electrophile in the catalytic mechanism. The active-site Proton acceptor is glutamate 169. Residues glycine 175, serine 214, and 235–236 (GG) contribute to the substrate site.

This sequence belongs to the triosephosphate isomerase family. As to quaternary structure, homodimer.

Its subcellular location is the cytoplasm. It carries out the reaction D-glyceraldehyde 3-phosphate = dihydroxyacetone phosphate. It functions in the pathway carbohydrate biosynthesis; gluconeogenesis. Its pathway is carbohydrate degradation; glycolysis; D-glyceraldehyde 3-phosphate from glycerone phosphate: step 1/1. In terms of biological role, involved in the gluconeogenesis. Catalyzes stereospecifically the conversion of dihydroxyacetone phosphate (DHAP) to D-glyceraldehyde-3-phosphate (G3P). In Rhizobium etli (strain ATCC 51251 / DSM 11541 / JCM 21823 / NBRC 15573 / CFN 42), this protein is Triosephosphate isomerase.